A 69-amino-acid chain; its full sequence is Guanine nucleotide-binding protein G(I)/G(S)/G(O) subunit gamma-T2 (69 aa).

The segment at 47-69 (DPLLKGIPEDKNPFKEKGGCMIS) is disordered. Positions 53–69 (IPEDKNPFKEKGGCMIS) are enriched in basic and acidic residues. Cys66 is modified (cysteine methyl ester). The S-farnesyl cysteine moiety is linked to residue Cys66. Positions 67–69 (MIS) are cleaved as a propeptide — removed in mature form.

This sequence belongs to the G protein gamma family. As to quaternary structure, g proteins are composed of 3 units, alpha, beta and gamma.

It localises to the cell membrane. Functionally, guanine nucleotide-binding proteins (G proteins) are involved as a modulator or transducer in various transmembrane signaling systems. The beta and gamma chains are required for the GTPase activity, for replacement of GDP by GTP, and for G protein-effector interaction. The chain is Guanine nucleotide-binding protein G(I)/G(S)/G(O) subunit gamma-T2 (GNGT2) from Canis lupus familiaris (Dog).